The chain runs to 575 residues: MRVSQILNPTLREVPAEAEVVSHQLLVRAGLIRKSAAGIYTYLPLGLRVLRKIEQIVREEMDAKGGQEVLLPIIQPAELWRESGRWDLYGQELMRLNDRHNREFCLGPTHEEIITDLIRGEIRSYKQLPLLLYQIQNKYRDERRPRFGLMRGREFIMKDLYSFDRDEAGLAESYKKMYDAYTRIFTRCGLTFRPVEADAGAIGGTGGTHEFMVLAESGEAAVVYCPDCDYAANVEKAECKPAPVAGDAPVGAYRGVDTPGTKTIEQVAEFLKVSKSDLVKSLLYQGDDKLFLILVRGDREINEIKVNNALGPFINLQLAGPEVVLEKLGCEPGYVGPIGAPKNLTVVADLEVPLMAKAVCGANAEDKHYVDAVPEKDFRIDQILDLRMVNAGEPCPQCGSPLKEARGIEVGQVFKLGTKYSKALNAVFLDENGAEHPCVMGCYGIGVSRTMAAAIEQNNDKDGIIWPIPIAPYHVIVVPVNMKDDQVRETGEALYQELLKLGVEAVLDDRDERPGVKFKDADLVGYPLRVTVGSKTLANGEVELRDRKTGEVQLVKVEELAGRIQGMIREALGVK.

It belongs to the class-II aminoacyl-tRNA synthetase family. ProS type 1 subfamily. As to quaternary structure, homodimer.

Its subcellular location is the cytoplasm. The catalysed reaction is tRNA(Pro) + L-proline + ATP = L-prolyl-tRNA(Pro) + AMP + diphosphate. In terms of biological role, catalyzes the attachment of proline to tRNA(Pro) in a two-step reaction: proline is first activated by ATP to form Pro-AMP and then transferred to the acceptor end of tRNA(Pro). As ProRS can inadvertently accommodate and process non-cognate amino acids such as alanine and cysteine, to avoid such errors it has two additional distinct editing activities against alanine. One activity is designated as 'pretransfer' editing and involves the tRNA(Pro)-independent hydrolysis of activated Ala-AMP. The other activity is designated 'posttransfer' editing and involves deacylation of mischarged Ala-tRNA(Pro). The misacylated Cys-tRNA(Pro) is not edited by ProRS. The polypeptide is Proline--tRNA ligase (Desulfitobacterium hafniense (strain DSM 10664 / DCB-2)).